Consider the following 352-residue polypeptide: MSFIDEAKVFVKGGNGGNGCVSFRREKYIEFGGPDGGNGGDGGSVILEASSAVNTLLFFRYHQHLRAENGKSGSGKKKSGASGRDLVIKVPIGTQVFDSPGGSLIADLSTVGQRYVVASGGKGGVGNAQYKSSTNRAPVYYTLGAVEEEFPIFMQLKVLSDIGIIGMPNAGKSSLLSRCTMSKTKVADYPFTTLEPHLGVARINEYDLILADIPGLIENANEGAGLGHKFLKHIERCSLLLHLIDGSTEDIVGAYKLVSRELAMYSKELSEKREVIVLNKCDMITEEEIVQKKHLLEDYSNKTVVTLSLDDPLNPLLVMLYEMLQKDDIEEESKKFDPFLHVGYNKKKTPKI.

In terms of domain architecture, Obg spans 1–159 (MSFIDEAKVF…FPIFMQLKVL (159 aa)). Positions 160 to 327 (SDIGIIGMPN…VMLYEMLQKD (168 aa)) constitute an OBG-type G domain. GTP-binding positions include 166 to 173 (GMPNAGKS), 191 to 195 (FTTLE), 212 to 215 (DIPG), 279 to 282 (NKCD), and 308 to 310 (SLD). Mg(2+)-binding residues include serine 173 and threonine 193.

The protein belongs to the TRAFAC class OBG-HflX-like GTPase superfamily. OBG GTPase family. In terms of assembly, monomer. Requires Mg(2+) as cofactor.

It is found in the cytoplasm. Its function is as follows. An essential GTPase which binds GTP, GDP and possibly (p)ppGpp with moderate affinity, with high nucleotide exchange rates and a fairly low GTP hydrolysis rate. Plays a role in control of the cell cycle, stress response, ribosome biogenesis and in those bacteria that undergo differentiation, in morphogenesis control. In Anaplasma phagocytophilum (strain HZ), this protein is GTPase Obg.